The sequence spans 1472 residues: ABC multidrug transporter atrI (1472 aa).

Residues 1–28 (MRRSNVVPVHSLTSSTNTGRDSRGEKYD) form a disordered region. In terms of domain architecture, ABC transporter 1 spans 134 to 384 (FRRETWNFRN…FERQGWFCPP (251 aa)). Asn143, Asn277, Asn308, and Asn332 each carry an N-linked (GlcNAc...) asparagine glycan. Helical transmembrane passes span 506–526 (ILAL…AGFY), 530–550 (ATLF…INSL), 580–600 (IPVK…LSGL), 605–625 (SQFF…SAVF), 639–659 (MTLA…VVPV), 664–684 (PWFK…ILIA), and 744–764 (FGIL…ATEL). The segment covering 784–793 (AHLKNGHEPG) has biased composition (basic and acidic residues). The disordered stretch occupies residues 784–821 (AHLKNGHEPGADEEAGAGKTVVSSSAEENKQDQGITSI). Over residues 804–821 (VVSSSAEENKQDQGITSI) the composition is skewed to polar residues. The ABC transporter 2 domain maps to 828-1070 (FTWRDVVYDI…TLLKYFESHG (243 aa)). Position 864 to 871 (864 to 871 (GVSGAGKT)) interacts with ATP. 6 helical membrane passes run 1168-1188 (YIAA…FSFF), 1204-1224 (VFML…LFIT), 1244-1264 (FMIA…ILVF), 1282-1302 (LVLL…DFVI), 1309-1329 (ETAG…NGVM), and 1337-1357 (GFWI…GMAA). Asn1402 carries an N-linked (GlcNAc...) asparagine glycan. The helical transmembrane segment at 1433–1453 (FGIFWAYVVFDIAVAVMLYYC) threads the bilayer. N-linked (GlcNAc...) asparagine glycosylation is present at Asn1460.

The protein belongs to the ABC transporter superfamily. ABCG family. PDR (TC 3.A.1.205) subfamily.

Its subcellular location is the cell membrane. The catalysed reaction is itraconazole(in) + ATP + H2O = itraconazole(out) + ADP + phosphate + H(+). It carries out the reaction voriconazole(in) + ATP + H2O = voriconazole(out) + ADP + phosphate + H(+). The enzyme catalyses fluconazole(in) + ATP + H2O = fluconazole(out) + ADP + phosphate + H(+). In terms of biological role, pleiotropic ABC efflux transporter involved in the basal level of azole susceptibility. Confers resistance to fluconazole, itraconazole and voriconazole. The sequence is that of ABC multidrug transporter atrI from Aspergillus fumigatus (strain ATCC MYA-4609 / CBS 101355 / FGSC A1100 / Af293) (Neosartorya fumigata).